The sequence spans 934 residues: Bifunctional uridylyltransferase/uridylyl-removing enzyme (934 aa).

Positions 1 to 379 are uridylyltransferase; that stretch reads MSAHDLKLEE…TFSRRKRKLS (379 aa). The segment at 380–736 is uridylyl-removing; that stretch reads ADGDFVSENH…AKPHTFEAVT (357 aa). The region spanning 496 to 613 is the HD domain; sequence VDEHLLRCIA…IDFADTVQTM (118 aa). 2 ACT domains span residues 737 to 819 and 848 to 931; these read EITV…VLAK and VIEV…RSSQ.

This sequence belongs to the GlnD family. Mg(2+) serves as cofactor.

It catalyses the reaction [protein-PII]-L-tyrosine + UTP = [protein-PII]-uridylyl-L-tyrosine + diphosphate. It carries out the reaction [protein-PII]-uridylyl-L-tyrosine + H2O = [protein-PII]-L-tyrosine + UMP + H(+). With respect to regulation, uridylyltransferase (UTase) activity is inhibited by glutamine, while glutamine activates uridylyl-removing (UR) activity. Functionally, modifies, by uridylylation and deuridylylation, the PII regulatory proteins (GlnB and homologs), in response to the nitrogen status of the cell that GlnD senses through the glutamine level. Under low glutamine levels, catalyzes the conversion of the PII proteins and UTP to PII-UMP and PPi, while under higher glutamine levels, GlnD hydrolyzes PII-UMP to PII and UMP (deuridylylation). Thus, controls uridylylation state and activity of the PII proteins, and plays an important role in the regulation of nitrogen assimilation and metabolism. This Brucella anthropi (strain ATCC 49188 / DSM 6882 / CCUG 24695 / JCM 21032 / LMG 3331 / NBRC 15819 / NCTC 12168 / Alc 37) (Ochrobactrum anthropi) protein is Bifunctional uridylyltransferase/uridylyl-removing enzyme.